The sequence spans 766 residues: FYVE, RhoGEF and PH domain-containing protein 4 (766 aa).

The actin filament-binding stretch occupies residues Met1–Asn150. Composition is skewed to polar residues over residues Ser43–Lys65, Arg132–Asn145, and Cys152–Thr161. The interval Ser43–Ser167 is disordered. Residues Lys206–Ala393 enclose the DH domain. In terms of domain architecture, PH 1 spans Glu422–Asp521. The FYVE-type zinc-finger motif lies at Asp559–Ser619. The Zn(2+) site is built by Cys565, Cys568, Cys582, Cys585, Cys590, Cys593, Cys611, and Cys614. The region spanning Asn643–Thr740 is the PH 2 domain. Ser702 and Ser716 each carry phosphoserine. Residues Asp745–Cys766 are disordered.

As to quaternary structure, homooligomer. Detected in brain, lung, liver, skeletal muscle, kidney, testis and cultured hippocampal neurons.

The protein localises to the cytoplasm. The protein resides in the cytoskeleton. Its subcellular location is the cell projection. It localises to the filopodium. Activates CDC42, a member of the Ras-like family of Rho- and Rac proteins, by exchanging bound GDP for free GTP. Plays a role in regulating the actin cytoskeleton and cell shape. Activates MAPK8. This Rattus norvegicus (Rat) protein is FYVE, RhoGEF and PH domain-containing protein 4 (Fgd4).